Consider the following 184-residue polypeptide: Putative axial regulator YABBY 2 (184 aa).

The C4-type zinc finger occupies 15-42; that stretch reads CSFCTTILAVSVPYASLFTLVTVRCGHC. 2 stretches are compositionally biased toward polar residues: residues 76 to 94 and 171 to 184; these read LVTR…NLSE and LDQS…NGYY. Disordered stretches follow at residues 76-115 and 162-184; these read LVTR…RQRV and LDGN…NGYY.

Belongs to the YABBY family. Interacts with SPL/NZZ and SPEAR2. In terms of tissue distribution, expressed at low levels in abaxial regions of lateral aerial organ primordia leading to cotyledons, leaves, flower meristems, sepals, petals, stamen and carpels, but not in roots.

It localises to the nucleus. Its function is as follows. Involved in the abaxial cell fate determination during embryogenesis and organogenesis. The chain is Putative axial regulator YABBY 2 (YAB2) from Arabidopsis thaliana (Mouse-ear cress).